Consider the following 223-residue polypeptide: Cytidylate kinase (223 aa).

An ATP-binding site is contributed by 12–20 (GPSGVGKGT).

The protein belongs to the cytidylate kinase family. Type 1 subfamily.

It localises to the cytoplasm. It catalyses the reaction CMP + ATP = CDP + ADP. The enzyme catalyses dCMP + ATP = dCDP + ADP. This is Cytidylate kinase from Xylella fastidiosa (strain 9a5c).